We begin with the raw amino-acid sequence, 315 residues long: Thymidylate synthase (315 aa).

DUMP-binding positions include R29 and R156–R157. C176 (nucleophile) is an active-site residue. DUMP contacts are provided by residues R213 to D216, N224, and H254 to Y256. D216 provides a ligand contact to (6R)-5,10-methylene-5,6,7,8-tetrahydrofolate.

It belongs to the thymidylate synthase family. In terms of assembly, homodimer.

It catalyses the reaction dUMP + (6R)-5,10-methylene-5,6,7,8-tetrahydrofolate = 7,8-dihydrofolate + dTMP. It functions in the pathway pyrimidine metabolism; dTTP biosynthesis. This Candida albicans (strain SC5314 / ATCC MYA-2876) (Yeast) protein is Thymidylate synthase (TMP1).